The chain runs to 789 residues: Trans-4-hydroxy-L-proline dehydratase (789 aa).

The region spanning 7-663 is the PFL domain; that stretch reads ERTKKLREES…IMGASPNGRL (657 aa). Catalysis depends on Cys434, which acts as the Cysteine radical intermediate. Glu436 acts as the Proton acceptor in catalysis. The 120-residue stretch at 670 to 789 folds into the Glycine radical domain; the sequence is EGISPEKGGD…EIIGRTEQTF (120 aa). A Glycine radical modification is found at Gly765.

This sequence belongs to the glycyl radical enzyme (GRE) family. HYPD subfamily. In terms of processing, requires the activating protein PflE to generate the key active site glycyl radical on Gly-765 that is involved in catalysis.

The catalysed reaction is trans-4-hydroxy-L-proline = (S)-1-pyrroline-5-carboxylate + H2O + H(+). Glycine radical enzyme that catalyzes the dehydration of the non-proteinogenic amino acid trans-4-hydroxy-L-proline (Hyp) to produce delta(1)-pyrroline-5-carboxylate (P5C). Is involved in the anaerobic degradation of 4-hydroxyproline. The polypeptide is Trans-4-hydroxy-L-proline dehydratase (Clostridioides difficile (Peptoclostridium difficile)).